The chain runs to 240 residues: MSPTIELLCGHRSIRHFTDEPVTDAQREAIIAAARSTSSSSFLQCSSIIRITDRALREALVPLTGGQKHVAQAAEFWVFCADFNRHLQICPDAQLGLAEQLLLGVVDTAMMGQNALTAAESLGLGGVYIGGIRNNIESVTELLKLPKHVLPLFGLCLGWPADNPDLKPRLPAELVVHENQYQPLDEKLLARYDEQLAEYYLTRGSNTRRDTWSDHIRRTLIKENRPFILEYLHKQGWATR.

FMN-binding positions include 11–15 (HRSIR), S39, Q67, 128–131 (YIGG), and 167–169 (KPR).

It belongs to the flavin oxidoreductase frp family. Homodimer. It depends on FMN as a cofactor.

Its function is as follows. Catalyzes the reduction of nitroaromatic compounds using NADPH. Has a broad electron acceptor specificity. Reduces nitrofurazone by a ping-pong bi-bi mechanism possibly to generate a two-electron transfer product. This chain is Oxygen-insensitive NADPH nitroreductase (nfsA), found in Salmonella typhimurium (strain LT2 / SGSC1412 / ATCC 700720).